A 299-amino-acid polypeptide reads, in one-letter code: 4-hydroxybenzoate octaprenyltransferase (299 aa).

7 helical membrane passes run 34-54 (IGSL…ADGL), 57-77 (LWTL…GCVI), 108-128 (LWVF…LNWL), 163-183 (WGIP…GWLL), 221-241 (FDLV…ALVD), 245-265 (DLGA…AYEF), and 277-297 (FRAF…IAVA).

Belongs to the UbiA prenyltransferase family. Requires Mg(2+) as cofactor.

Its subcellular location is the cell inner membrane. The enzyme catalyses all-trans-octaprenyl diphosphate + 4-hydroxybenzoate = 4-hydroxy-3-(all-trans-octaprenyl)benzoate + diphosphate. The protein operates within cofactor biosynthesis; ubiquinone biosynthesis. In terms of biological role, catalyzes the prenylation of para-hydroxybenzoate (PHB) with an all-trans polyprenyl group. Mediates the second step in the final reaction sequence of ubiquinone-8 (UQ-8) biosynthesis, which is the condensation of the polyisoprenoid side chain with PHB, generating the first membrane-bound Q intermediate 3-octaprenyl-4-hydroxybenzoate. This chain is 4-hydroxybenzoate octaprenyltransferase, found in Xanthomonas oryzae pv. oryzae (strain MAFF 311018).